The primary structure comprises 901 residues: Alanine--tRNA ligase (901 aa).

His581, His585, Cys684, and His688 together coordinate Zn(2+).

This sequence belongs to the class-II aminoacyl-tRNA synthetase family. The cofactor is Zn(2+).

Its subcellular location is the cytoplasm. It catalyses the reaction tRNA(Ala) + L-alanine + ATP = L-alanyl-tRNA(Ala) + AMP + diphosphate. In terms of biological role, catalyzes the attachment of alanine to tRNA(Ala) in a two-step reaction: alanine is first activated by ATP to form Ala-AMP and then transferred to the acceptor end of tRNA(Ala). Also edits incorrectly charged Ser-tRNA(Ala) and Gly-tRNA(Ala) via its editing domain. This Mycobacterium marinum (strain ATCC BAA-535 / M) protein is Alanine--tRNA ligase.